Consider the following 145-residue polypeptide: MSTPFWQSKTLQEMTEQEWESLCDGCGKCCLHKLMDEETDEVFYTNVACSWLNSKTCSCKDYPNRFSSGENCLKLTQDKIAEFHWLPRTCAYRRLSENQPLPEWHPLITGSKSAMHAAGQSIRNRVVYEIDVKDWEDHVIENPDY.

This sequence belongs to the UPF0260 family.

The sequence is that of UPF0260 protein VV2402 from Vibrio vulnificus (strain YJ016).